The following is a 211-amino-acid chain: Beta-crystallin B3 (211 aa).

Met-1 is modified (N-acetylmethionine). Ala-2 carries the N-acetylalanine; in Beta-crystallin B3, N-terminally processed modification. The N-terminal arm stretch occupies residues 2 to 23 (AEQHGAPEQAAAGKSHGDLGGS). Beta/gamma crystallin 'Greek key' domains follow at residues 24 to 63 (YKVILYELENFQGKRCELSAECPSLTDSLLEKVGSIQVES) and 64 to 108 (GPWL…RPLN). Residues 109 to 113 (IDSPH) are connecting peptide. Beta/gamma crystallin 'Greek key' domains follow at residues 114–155 (HKLH…RAIN) and 156–198 (GTWV…RRIR). Residues 200–211 (QKWHKRGRFPSS) are C-terminal arm.

It belongs to the beta/gamma-crystallin family. As to quaternary structure, homo/heterodimer, or complexes of higher-order. The structure of beta-crystallin oligomers seems to be stabilized through interactions between the N-terminal arms.

Its function is as follows. Crystallins are the dominant structural components of the vertebrate eye lens. This Homo sapiens (Human) protein is Beta-crystallin B3 (CRYBB3).